Reading from the N-terminus, the 254-residue chain is RING-H2 finger protein ATL28 (254 aa).

A helical transmembrane segment spans residues 25–45 (VVLTGVLLFVIFAGFFSLFLW). The segment at 103–145 (CAICLSEFSDEDTVRLITVCRHPFHSNCIDLWFELHKTCPVCR) adopts an RING-type; atypical zinc-finger fold.

It belongs to the RING-type zinc finger family. ATL subfamily.

It localises to the membrane. The catalysed reaction is S-ubiquitinyl-[E2 ubiquitin-conjugating enzyme]-L-cysteine + [acceptor protein]-L-lysine = [E2 ubiquitin-conjugating enzyme]-L-cysteine + N(6)-ubiquitinyl-[acceptor protein]-L-lysine.. Its pathway is protein modification; protein ubiquitination. The sequence is that of RING-H2 finger protein ATL28 (ATL28) from Arabidopsis thaliana (Mouse-ear cress).